Here is an 802-residue protein sequence, read N- to C-terminus: Copper-exporting P-type ATPase (802 aa).

HMA domains follow at residues 5–71 (KEIA…YHVV) and 73–139 (EKAE…YKLK). Cu(+) is bound by residues C16, C19, C84, and C87. A run of 6 helical transmembrane segments spans residues 162-181 (LIFS…SHFT), 196-218 (WMQF…VGAY), 230-249 (VLVA…LTFQ), 259-278 (GLYY…GKLF), 412-434 (ISGI…WYLW), and 447-469 (FIAV…SIMA). D499 acts as the 4-aspartylphosphate intermediate in catalysis. Residues D698 and D702 each coordinate Mg(2+). Transmembrane regions (helical) follow at residues 756-775 (LFWA…LGFL) and 779-796 (IAGA…LNAL).

The protein belongs to the cation transport ATPase (P-type) (TC 3.A.3) family. Type IB subfamily. In terms of assembly, monomer at sub-stoichiometric copper concentrations. Homodimer at higher copper concentrations. Forms a heterodimer (electrostatic interactions) with CopZ during the transfer of Cu(+).

Its subcellular location is the cell membrane. The enzyme catalyses Cu(+)(in) + ATP + H2O = Cu(+)(out) + ADP + phosphate + H(+). Functionally, involved in copper export. This is Copper-exporting P-type ATPase (copA) from Bacillus subtilis (strain 168).